The chain runs to 591 residues: Adenine deaminase (591 aa).

Belongs to the metallo-dependent hydrolases superfamily. Adenine deaminase family. As to quaternary structure, homodimer. It depends on Mn(2+) as a cofactor.

The catalysed reaction is adenine + H2O + H(+) = hypoxanthine + NH4(+). The chain is Adenine deaminase from Edwardsiella ictaluri (strain 93-146).